Here is a 180-residue protein sequence, read N- to C-terminus: DNA-directed RNA polymerase subunit Rpo7 (180 aa).

In terms of domain architecture, S1 motif spans 82–165; that stretch reads QEVVEGEVLQ…RLPRIALTMR (84 aa).

Belongs to the eukaryotic RPB7/RPC8 RNA polymerase subunit family. As to quaternary structure, part of the 13-subunit RNA polymerase complex. Forms a stalk with Rpo4 that extends from the main structure.

It is found in the cytoplasm. The catalysed reaction is RNA(n) + a ribonucleoside 5'-triphosphate = RNA(n+1) + diphosphate. Functionally, DNA-dependent RNA polymerase (RNAP) catalyzes the transcription of DNA into RNA using the four ribonucleoside triphosphates as substrates. This chain is DNA-directed RNA polymerase subunit Rpo7, found in Saccharolobus solfataricus (strain ATCC 35092 / DSM 1617 / JCM 11322 / P2) (Sulfolobus solfataricus).